The primary structure comprises 135 residues: Transcriptional activator protein (135 aa).

The Nuclear localization signal signature appears at 17-32; that stretch reads KVQHKIAKKKPIRRKR. Residues 37–54 fold into a zinc finger; sequence CGCSYYLHLNCNNHGFTH. 2 stretches are compositionally biased toward polar residues: residues 77 to 87 and 101 to 115; these read LFQDNRTQPEA and IQPQ…SQMF. Residues 77–117 form a disordered region; it reads LFQDNRTQPEAISNEPRHHFHSDKIQPQHQEGNGDSQMFSR. Positions 120–135 are transactivation; it reads NLDDITASDWSFLKSI.

This sequence belongs to the geminiviridae transcriptional activator protein family. In terms of assembly, monomer. Homodimer. Homooligomer. Self-interaction correlates with nuclear localization and efficient activation of transcription. Monomers suppress local silencing by interacting with and inactivating host adenosine kinase 2 (ADK2) in the cytoplasm. Interacts with and inhibits host SNF1 kinase. Binds to ssDNA. May interact with host RPS27A. In terms of processing, phosphorylated.

The protein localises to the host nucleus. The protein resides in the host cytoplasm. In terms of biological role, multifunctional protein that modulates host antiviral defenses and promotes host attractiveness to insect vectors. Acts as a suppressor of RNA-mediated gene silencing, also known as post-transcriptional gene silencing (PTGS), a mechanism of plant viral defense that limits the accumulation of viral RNAs. TrAP suppresses the host RNA silencing by inhibiting adenosine kinase 2 (ADK2), a kinase involved in a general methylation pathway. Also suppresses the host basal defense by interacting with and inhibiting SNF1 kinase, a key regulator of cell metabolism implicated in innate antiviral defense. Inhibits signal transduction by the phytohormone jasmonate, making the infected plant more attractive to aphids, which are the second host to play a role as a dissemination vector. Acts by binding to ubiquitin precursor RPS27A, thereby preventing ubiquitin degradation of JAZ. This Tomato yellow leaf curl virus (strain Israel) (TYLCV) protein is Transcriptional activator protein.